The sequence spans 232 residues: Urease accessory protein UreF (232 aa).

This sequence belongs to the UreF family. As to quaternary structure, ureD, UreF and UreG form a complex that acts as a GTP-hydrolysis-dependent molecular chaperone, activating the urease apoprotein by helping to assemble the nickel containing metallocenter of UreC. The UreE protein probably delivers the nickel.

The protein resides in the cytoplasm. Required for maturation of urease via the functional incorporation of the urease nickel metallocenter. In Azorhizobium caulinodans (strain ATCC 43989 / DSM 5975 / JCM 20966 / LMG 6465 / NBRC 14845 / NCIMB 13405 / ORS 571), this protein is Urease accessory protein UreF.